Here is a 1063-residue protein sequence, read N- to C-terminus: Integrin alpha-8 (1063 aa).

The N-terminal stretch at 1 to 38 (MSPGASRGPRGSQAPLIAPLCCAAAALGMLLWSPACQA) is a signal peptide. Topologically, residues 39 to 1012 (FNLDVEKLTV…TPNVSFSIPL (974 aa)) are extracellular. 7 FG-GAP repeats span residues 44–105 (EKLT…GSAQ), 122–183 (NGTK…AYAE), 188–240 (RNSN…IANY), 253–306 (KQTE…STDM), 307–372 (TFIQ…LLFR), 373–431 (DPQI…GLNT), and 435–498 (QVLQ…LHPM). Asn-81 carries an N-linked (GlcNAc...) asparagine glycan. A disulfide bond links Cys-96 and Cys-106. An N-linked (GlcNAc...) asparagine glycan is attached at Asn-122. The cysteines at positions 150 and 171 are disulfide-linked. An N-linked (GlcNAc...) asparagine glycan is attached at Asn-177. A disulfide bridge connects residues Cys-187 and Cys-200. An N-linked (GlcNAc...) asparagine glycan is attached at Asn-239. Glu-275, Thr-277, Asp-279, and Glu-283 together coordinate Ca(2+). N-linked (GlcNAc...) asparagine glycosylation is found at Asn-302 and Asn-311. Asp-329, Asn-331, Asp-333, Leu-335, Asp-337, Asp-395, Asn-397, Asp-399, Tyr-401, and Asp-403 together coordinate Ca(2+). The Cell attachment site signature appears at 455–457 (RGD). Ca(2+)-binding residues include Asp-459, Asp-461, Asn-463, Tyr-465, and Asp-467. Asn-504 is a glycosylation site (N-linked (GlcNAc...) asparagine). 2 disulfide bridges follow: Cys-507–Cys-518 and Cys-524–Cys-580. N-linked (GlcNAc...) asparagine glycans are attached at residues Asn-601 and Asn-605. Intrachain disulfides connect Cys-641–Cys-647 and Cys-713–Cys-726. N-linked (GlcNAc...) asparagine glycans are attached at residues Asn-719, Asn-737, Asn-753, Asn-780, Asn-896, and Asn-923. 2 cysteine pairs are disulfide-bonded: Cys-867–Cys-924 and Cys-929–Cys-934. The N-linked (GlcNAc...) asparagine glycan is linked to Asn-1005. Residues 1013–1033 (WVIILAILLGLLVLAILTLAL) form a helical membrane-spanning segment. At 1034 to 1063 (WKCGFFDRARPPQEDMTDREQLTNDKTPEA) the chain is on the cytoplasmic side.

This sequence belongs to the integrin alpha chain family. As to quaternary structure, heterodimer of an alpha and a beta subunit. The alpha subunit is composed of a heavy and a light chain linked by a disulfide bond. Alpha-8 associates with beta-1. As to expression, expressed in mesenchymal cells, including alveolar myofibroblasts, kidney mesangial cells and hepatic stellar cells and vascular and visceral smooth muscle (at protein level).

It localises to the membrane. It is found in the cell membrane. In terms of biological role, integrin alpha-8/beta-1 functions in the genesis of kidney and probably of other organs by regulating the recruitment of mesenchymal cells into epithelial structures. It recognizes the sequence R-G-D in a wide array of ligands including TNC, FN1, SPP1 TGFB1, TGFB3 and VTN. NPNT is probably its functional ligand in kidney genesis. Neuronal receptor for TNC it mediates cell-cell interactions and regulates neurite outgrowth of sensory and motor neurons. This is Integrin alpha-8 (ITGA8) from Homo sapiens (Human).